The chain runs to 348 residues: uncharacterized protein (348 aa).

6 WD repeats span residues 59–98 (GFQG…VVYS), 142–182 (GHTD…LIQT), 185–226 (DNLG…LLGT), 229–267 (QQPG…ELFS), 270–309 (GPSL…QVTT), and 312–347 (GHQG…SALA).

This is an uncharacterized protein from Synechocystis sp. (strain ATCC 27184 / PCC 6803 / Kazusa).